A 62-amino-acid chain; its full sequence is Toxin Tst2 (62 aa).

In terms of domain architecture, LCN-type CS-alpha/beta spans 1–62 (KEGYAMDHEG…KVWDYATNKC (62 aa)). Cystine bridges form between Cys-11–Cys-62, Cys-15–Cys-38, Cys-23–Cys-43, and Cys-27–Cys-45. Cys-62 carries the cysteine amide modification.

As to expression, expressed by the venom gland.

The protein resides in the secreted. Its function is as follows. Alpha toxins bind voltage-independently at site-3 of sodium channels (Nav) and inhibit the inactivation of the activated channels, thereby blocking neuronal transmission. Is toxic to mice. The polypeptide is Toxin Tst2 (Tityus stigmurus (Brazilian scorpion)).